The following is a 708-amino-acid chain: GID complex associated protein 12 (708 aa).

Positions 381 to 396 (SSRRNSSFSTASSEPR) are enriched in low complexity. The tract at residues 381 to 403 (SSRRNSSFSTASSEPRPLSRRRR) is disordered.

As to quaternary structure, interacts with core components of the GID/CTLH ubiquitin ligase complex. GID12 binds both the substrate receptor GID4 and the tip of GID5 in the scaffolding module, sealing GID4 onto the scaffold.

In terms of biological role, regulator of the GID E3 ligase complex. Modulates both assembly of the substrate receptor GID4 into the GID E3 ligase complex and its activity toward its substrates. GID12-binding remodels the N-degron binding pocket in the GID(SR4) complex, and could limit substrate accessibility of a bulky substrate to a ubiquitynation active site, thereby stabilizing gluconeogenic enzyme substrates. Involved in actin patch formation. The polypeptide is GID complex associated protein 12 (Saccharomyces cerevisiae (strain ATCC 204508 / S288c) (Baker's yeast)).